The chain runs to 356 residues: Carbamoyl phosphate synthase small chain (356 aa).

A CPSase region spans residues 1–160 (MKGYLKLEDG…TKKPYRIAGI (160 aa)). The L-glutamine site is built by serine 45, glycine 211, and glycine 213. The Glutamine amidotransferase type-1 domain maps to 163 to 350 (KLAFIDLGTK…MDIVMVYKRR (188 aa)). The active-site Nucleophile is cysteine 238. L-glutamine-binding residues include leucine 239, glutamine 242, asparagine 280, glycine 282, and tyrosine 283. Active-site residues include histidine 323 and glutamate 325.

The protein belongs to the CarA family. Composed of two chains; the small (or glutamine) chain promotes the hydrolysis of glutamine to ammonia, which is used by the large (or ammonia) chain to synthesize carbamoyl phosphate. Tetramer of heterodimers (alpha,beta)4.

The enzyme catalyses hydrogencarbonate + L-glutamine + 2 ATP + H2O = carbamoyl phosphate + L-glutamate + 2 ADP + phosphate + 2 H(+). The catalysed reaction is L-glutamine + H2O = L-glutamate + NH4(+). It functions in the pathway amino-acid biosynthesis; L-arginine biosynthesis; carbamoyl phosphate from bicarbonate: step 1/1. Its pathway is pyrimidine metabolism; UMP biosynthesis via de novo pathway; (S)-dihydroorotate from bicarbonate: step 1/3. In terms of biological role, small subunit of the glutamine-dependent carbamoyl phosphate synthetase (CPSase). CPSase catalyzes the formation of carbamoyl phosphate from the ammonia moiety of glutamine, carbonate, and phosphate donated by ATP, constituting the first step of 2 biosynthetic pathways, one leading to arginine and/or urea and the other to pyrimidine nucleotides. The small subunit (glutamine amidotransferase) binds and cleaves glutamine to supply the large subunit with the substrate ammonia. The protein is Carbamoyl phosphate synthase small chain of Caldanaerobacter subterraneus subsp. tengcongensis (strain DSM 15242 / JCM 11007 / NBRC 100824 / MB4) (Thermoanaerobacter tengcongensis).